A 387-amino-acid chain; its full sequence is Succinate--CoA ligase [ADP-forming] subunit beta (387 aa).

The ATP-grasp domain occupies K9–L244. ATP contacts are provided by residues K46, G53–G55, G102, and E107. Mg(2+) is bound by residues N199 and D213. Residues N264 and G321 to V323 each bind substrate.

The protein belongs to the succinate/malate CoA ligase beta subunit family. In terms of assembly, heterotetramer of two alpha and two beta subunits. Mg(2+) is required as a cofactor.

It carries out the reaction succinate + ATP + CoA = succinyl-CoA + ADP + phosphate. The enzyme catalyses GTP + succinate + CoA = succinyl-CoA + GDP + phosphate. Its pathway is carbohydrate metabolism; tricarboxylic acid cycle; succinate from succinyl-CoA (ligase route): step 1/1. Functionally, succinyl-CoA synthetase functions in the citric acid cycle (TCA), coupling the hydrolysis of succinyl-CoA to the synthesis of either ATP or GTP and thus represents the only step of substrate-level phosphorylation in the TCA. The beta subunit provides nucleotide specificity of the enzyme and binds the substrate succinate, while the binding sites for coenzyme A and phosphate are found in the alpha subunit. The chain is Succinate--CoA ligase [ADP-forming] subunit beta from Xylella fastidiosa (strain 9a5c).